The primary structure comprises 220 residues: Ribosomal RNA small subunit methyltransferase G (220 aa).

S-adenosyl-L-methionine is bound by residues glycine 82, leucine 87, 137–138, and arginine 152; that span reads VE.

The protein belongs to the methyltransferase superfamily. RNA methyltransferase RsmG family.

The protein resides in the cytoplasm. It carries out the reaction guanosine(527) in 16S rRNA + S-adenosyl-L-methionine = N(7)-methylguanosine(527) in 16S rRNA + S-adenosyl-L-homocysteine. Its function is as follows. Specifically methylates the N7 position of guanine in position 527 of 16S rRNA. This is Ribosomal RNA small subunit methyltransferase G from Janthinobacterium sp. (strain Marseille) (Minibacterium massiliensis).